The chain runs to 248 residues: 3-deoxy-manno-octulosonate cytidylyltransferase (248 aa).

Belongs to the KdsB family.

The protein resides in the cytoplasm. The catalysed reaction is 3-deoxy-alpha-D-manno-oct-2-ulosonate + CTP = CMP-3-deoxy-beta-D-manno-octulosonate + diphosphate. Its pathway is nucleotide-sugar biosynthesis; CMP-3-deoxy-D-manno-octulosonate biosynthesis; CMP-3-deoxy-D-manno-octulosonate from 3-deoxy-D-manno-octulosonate and CTP: step 1/1. It participates in bacterial outer membrane biogenesis; lipopolysaccharide biosynthesis. In terms of biological role, activates KDO (a required 8-carbon sugar) for incorporation into bacterial lipopolysaccharide in Gram-negative bacteria. The chain is 3-deoxy-manno-octulosonate cytidylyltransferase from Citrobacter koseri (strain ATCC BAA-895 / CDC 4225-83 / SGSC4696).